A 52-amino-acid polypeptide reads, in one-letter code: Conotoxin Cal9.2b (52 aa).

Positions 1–6 (KKGVTL) are excised as a propeptide. Cystine bridges form between Cys-14–Cys-31, Cys-19–Cys-41, and Cys-21–Cys-46.

As to expression, expressed by the venom duct.

Its subcellular location is the secreted. In terms of biological role, probable neurotoxin with unknown target. Possibly targets ion channels. This chain is Conotoxin Cal9.2b, found in Californiconus californicus (California cone).